Here is a 92-residue protein sequence, read N- to C-terminus: MTRSVWKGPFVDGYLLKKAEAASGSGRRDVIKIWSRRSTILPQFVGLTFGVYNGHKHVPVNVSEEMIGHKFGEFAPTRTYYGHAADKKSKRR.

Belongs to the universal ribosomal protein uS19 family.

In terms of biological role, protein S19 forms a complex with S13 that binds strongly to the 16S ribosomal RNA. The sequence is that of Small ribosomal subunit protein uS19 from Xanthobacter autotrophicus (strain ATCC BAA-1158 / Py2).